A 419-amino-acid polypeptide reads, in one-letter code: Dimethylamine methyltransferase MtbB2 (419 aa).

Pyl308 is a non-standard amino acid (pyrrolysine).

The protein belongs to the dimethylamine methyltransferase family.

The enzyme catalyses Co(I)-[dimethylamine-specific corrinoid protein] + dimethylamine + H(+) = methyl-Co(III)-[dimethylamine-specific corrinoid protein] + methylamine. It participates in one-carbon metabolism; methanogenesis from dimethylamine. In terms of biological role, catalyzes the transfer of a methyl group from dimethylamine to the corrinoid cofactor of MtbC. No evidence for expression of this protein has been found after growth under presumably inducing conditions. This is Dimethylamine methyltransferase MtbB2 from Methanosarcina barkeri.